The primary structure comprises 370 residues: Chloromuconate cycloisomerase (370 aa).

Residue K165 is the Proton acceptor of the active site. 3 residues coordinate Mn(2+): D194, E220, and D245. The active-site Proton donor is E323.

The protein belongs to the mandelate racemase/muconate lactonizing enzyme family. Mn(2+) is required as a cofactor.

The enzyme catalyses 2-[(2R)-2-chloro-2,5-dihydro-5-oxofuryl]acetate = 3-chloro-cis,cis-muconate + H(+). It functions in the pathway aromatic compound metabolism; 3-chlorocatechol degradation. This chain is Chloromuconate cycloisomerase (tfdD), found in Delftia acidovorans (Pseudomonas acidovorans).